Here is a 79-residue protein sequence, read N- to C-terminus: MILPIIEFCISNLASGSQKAMEILEKDPNLDIIEYSCLSYCTRCADTLFALVNGEFVSGETPEQLVENIYRHLEENPMF.

Belongs to the UPF0349 family.

The protein is UPF0349 protein GTNG_2908 of Geobacillus thermodenitrificans (strain NG80-2).